The sequence spans 409 residues: All trans-polyprenyl-diphosphate synthase PDSS1 (409 aa).

The isopentenyl diphosphate site is built by Lys-128, Arg-131, and His-167. 2 residues coordinate Mg(2+): Asp-174 and Asp-178. Isopentenyl diphosphate is bound at residue Arg-184.

Belongs to the FPP/GGPP synthase family. Heterotetramer composed of 2 PDSS1/DPS1 and 2 PDSS2/DLP1 subunits. It depends on Mg(2+) as a cofactor.

It localises to the mitochondrion. The enzyme catalyses 7 isopentenyl diphosphate + (2E,6E)-farnesyl diphosphate = all-trans-decaprenyl diphosphate + 7 diphosphate. It catalyses the reaction 6 isopentenyl diphosphate + (2E,6E)-farnesyl diphosphate = all-trans-nonaprenyl diphosphate + 6 diphosphate. It functions in the pathway cofactor biosynthesis; ubiquinone biosynthesis. Its function is as follows. Heterotetrameric enzyme that catalyzes the condensation of farnesyl diphosphate (FPP), which acts as a primer, and isopentenyl diphosphate (IPP) to produce prenyl diphosphates of varying chain lengths and participates in the determination of the side chain of ubiquinone. Supplies nona and decaprenyl diphosphate, the precursors for the side chain of the isoprenoid quinones ubiquinone-9 (Q9)and ubiquinone-10 (Q10) respectively. The enzyme adds isopentenyl diphosphate molecules sequentially to farnesyl diphosphate with trans stereochemistry. The polypeptide is All trans-polyprenyl-diphosphate synthase PDSS1 (Mus musculus (Mouse)).